We begin with the raw amino-acid sequence, 251 residues long: Cytochrome c oxidase subunit 2 (251 aa).

Residues 1 to 15 (MLTFLSNLNNMIIMN) form the signal peptide. The Mitochondrial intermembrane segment spans residues 16–42 (DVPTPYGVYFQDSATPNQEGILELHDN). The helical transmembrane segment at 43 to 64 (IMFYLLVILGLVSWLLFTITRT) threads the bilayer. Over 65-82 (YSKNPIAYKYIKHGQTIE) the chain is Mitochondrial matrix. The helical transmembrane segment at 83–107 (IIWTIFPAVVLLIIAFPSFILLYLC) threads the bilayer. The Mitochondrial intermembrane portion of the chain corresponds to 108–251 (DEVISPAMTI…PSFLEWLNEQ (144 aa)). Cu cation is bound by residues histidine 186, cysteine 221, glutamate 223, cysteine 225, histidine 229, and methionine 232. Glutamate 223 lines the Mg(2+) pocket.

It belongs to the cytochrome c oxidase subunit 2 family. Component of the cytochrome c oxidase (complex IV, CIV), a multisubunit enzyme composed of a catalytic core of 3 subunits and several supernumerary subunits. The complex exists as a monomer or a dimer and forms supercomplexes (SCs) in the inner mitochondrial membrane with ubiquinol-cytochrome c oxidoreductase (cytochrome b-c1 complex, complex III, CIII). Cu cation is required as a cofactor. Post-translationally, the signal sequence of COX2 is processed by IMP1.

The protein resides in the mitochondrion inner membrane. The enzyme catalyses 4 Fe(II)-[cytochrome c] + O2 + 8 H(+)(in) = 4 Fe(III)-[cytochrome c] + 2 H2O + 4 H(+)(out). Its function is as follows. Component of the cytochrome c oxidase, the last enzyme in the mitochondrial electron transport chain which drives oxidative phosphorylation. The respiratory chain contains 3 multisubunit complexes succinate dehydrogenase (complex II, CII), ubiquinol-cytochrome c oxidoreductase (cytochrome b-c1 complex, complex III, CIII) and cytochrome c oxidase (complex IV, CIV), that cooperate to transfer electrons derived from NADH and succinate to molecular oxygen, creating an electrochemical gradient over the inner membrane that drives transmembrane transport and the ATP synthase. Cytochrome c oxidase is the component of the respiratory chain that catalyzes the reduction of oxygen to water. Electrons originating from reduced cytochrome c in the intermembrane space (IMS) are transferred via the dinuclear copper A center (CU(A)) of subunit 2 and heme A of subunit 1 to the active site in subunit 1, a binuclear center (BNC) formed by heme A3 and copper B (CU(B)). The BNC reduces molecular oxygen to 2 water molecules using 4 electrons from cytochrome c in the IMS and 4 protons from the mitochondrial matrix. This chain is Cytochrome c oxidase subunit 2 (COX2), found in Lachancea kluyveri (strain ATCC 58438 / CBS 3082 / BCRC 21498 / NBRC 1685 / JCM 7257 / NCYC 543 / NRRL Y-12651) (Yeast).